We begin with the raw amino-acid sequence, 178 residues long: Inner membrane-spanning protein YciB (178 aa).

A run of 6 helical transmembrane segments spans residues 1 to 21 (MKIL…KMTG), 23 to 43 (IIIA…FTWF), 51 to 71 (MHLV…LLGD), 77 to 97 (WKPT…QFIG), 120 to 140 (LNLA…YVAF), and 150 to 170 (FKLF…GIYL).

It belongs to the YciB family.

It is found in the cell inner membrane. Plays a role in cell envelope biogenesis, maintenance of cell envelope integrity and membrane homeostasis. The chain is Inner membrane-spanning protein YciB from Marinomonas sp. (strain MWYL1).